The primary structure comprises 127 residues: Ribonuclease P protein component (127 aa).

The protein belongs to the RnpA family. In terms of assembly, consists of a catalytic RNA component (M1 or rnpB) and a protein subunit.

The catalysed reaction is Endonucleolytic cleavage of RNA, removing 5'-extranucleotides from tRNA precursor.. Its function is as follows. RNaseP catalyzes the removal of the 5'-leader sequence from pre-tRNA to produce the mature 5'-terminus. It can also cleave other RNA substrates such as 4.5S RNA. The protein component plays an auxiliary but essential role in vivo by binding to the 5'-leader sequence and broadening the substrate specificity of the ribozyme. The protein is Ribonuclease P protein component of Synechococcus sp. (strain RCC307).